We begin with the raw amino-acid sequence, 97 residues long: Defensin alpha 4 (97 aa).

Positions 1–19 (MRIIAILAAILLVALQVRA) are cleaved as a signal peptide. Positions 20–63 (GPLQARGDEAPGQEQRGPEDQDISISFAWDKSSALQVSGSTRGM) are excised as a propeptide. 3 cysteine pairs are disulfide-bonded: C65–C93, C67–C82, and C72–C92. Residue D97 is a propeptide.

Belongs to the alpha-defensin family. In terms of assembly, homodimer; homodimerization seems to be required for killing S.aureus, but not E.coli. Interacts with CD4. Interacts with Bacillus anthracis lef; homodimerization is required for the interaction. Post-translationally, the three-dimensional structure formed by the three intramolecular disulfide bridges is indispensable for effective bacterial killing.

It localises to the secreted. The protein resides in the cytoplasmic vesicle. The protein localises to the secretory vesicle. Host-defense peptide that has antimicrobial activity against Gram-negative bacteria, and to a lesser extent also against Gram-positive bacteria and fungi. Exhibits antimicrobial activity against Gram-negative E.coli and E.aerogenes and Gram-positive S.faecalis, S.aureus and B.cereus and the yeast C.albicans (in vitro). Inhibits corticotropin (ACTH)-stimulated corticosterone production (in vitro). Inhibits enzymatic activity of B.anthracis lef/anthrax lethal factor (in vitro). In Pan troglodytes (Chimpanzee), this protein is Defensin alpha 4 (DEFA4).